The primary structure comprises 176 residues: Peptide methionine sulfoxide reductase MsrA (176 aa).

Cys-10 is an active-site residue.

Belongs to the MsrA Met sulfoxide reductase family.

It catalyses the reaction L-methionyl-[protein] + [thioredoxin]-disulfide + H2O = L-methionyl-(S)-S-oxide-[protein] + [thioredoxin]-dithiol. It carries out the reaction [thioredoxin]-disulfide + L-methionine + H2O = L-methionine (S)-S-oxide + [thioredoxin]-dithiol. Functionally, has an important function as a repair enzyme for proteins that have been inactivated by oxidation. Catalyzes the reversible oxidation-reduction of methionine sulfoxide in proteins to methionine. The polypeptide is Peptide methionine sulfoxide reductase MsrA (Leptospira borgpetersenii serovar Hardjo-bovis (strain JB197)).